Reading from the N-terminus, the 74-residue chain is ATP synthase subunit c (74 aa).

The next 2 membrane-spanning stretches (helical) occupy residues 8 to 28 (FIGT…VSNI) and 52 to 72 (IGAG…MLLI).

Belongs to the ATPase C chain family. F-type ATPases have 2 components, F(1) - the catalytic core - and F(0) - the membrane proton channel. F(1) has five subunits: alpha(3), beta(3), gamma(1), delta(1), epsilon(1). F(0) has three main subunits: a(1), b(2) and c(10-14). The alpha and beta chains form an alternating ring which encloses part of the gamma chain. F(1) is attached to F(0) by a central stalk formed by the gamma and epsilon chains, while a peripheral stalk is formed by the delta and b chains.

The protein localises to the cell inner membrane. Functionally, f(1)F(0) ATP synthase produces ATP from ADP in the presence of a proton or sodium gradient. F-type ATPases consist of two structural domains, F(1) containing the extramembraneous catalytic core and F(0) containing the membrane proton channel, linked together by a central stalk and a peripheral stalk. During catalysis, ATP synthesis in the catalytic domain of F(1) is coupled via a rotary mechanism of the central stalk subunits to proton translocation. Key component of the F(0) channel; it plays a direct role in translocation across the membrane. A homomeric c-ring of between 10-14 subunits forms the central stalk rotor element with the F(1) delta and epsilon subunits. The protein is ATP synthase subunit c of Rickettsia conorii (strain ATCC VR-613 / Malish 7).